We begin with the raw amino-acid sequence, 503 residues long: uncharacterized protein (503 aa).

A helical transmembrane segment spans residues 26–46; that stretch reads ILFLLLGLIILVNISINVATA. Disordered stretches follow at residues 155 to 176, 311 to 381, 436 to 456, and 472 to 503; these read RPLS…MSQM, YDAR…ESHE, QISD…NPGG, and VQEN…GKLN. Composition is skewed to basic and acidic residues over residues 311–322 and 334–346; these read YDARDQWRRGTE and NPRE…DHNS. Positions 348 to 367 are enriched in polar residues; that stretch reads AHRQNFSSHTHSQPNHSPPQ. Residues 493-503 show a composition bias toward basic residues; it reads SLHRSRTGKLN.

Its subcellular location is the membrane. This is an uncharacterized protein from Mus musculus (Mouse).